The chain runs to 1159 residues: MSIRFVYGRSGTGKSKFCIDEIKNNIDKKLDFNKLILLVPEQYTFMTENKILHEIGENAFFRTEVLSFKKMAHNIFEEYGGRVKEIIKESGRNMLIHRVINENIEFLDYFNRMSREQGFNEIISEVISEFKKYNISIDSIRAIDEKINDAELYQKVKELMIIYEAFNLKMHENYIDGDDELTLLDKKLLESSAYVDSEVWIDEFTSFTPQQLDIIKVLAKRCRRVNITFCIDNKSLNNNSEDITDVFNIIKSTENKILKIMKENNIAYDKPVNLNNAIPYRFKGNLELDHIEKYFFSYPFNEYDKNPESITLYKASNIYDEIERVSKSITSLVRENGYRYRDISVVCRNIDDYEKIISVIFKDYNIPYFLDKKIQLLSNPLIVLISSAFEILLKNWSYESVFKYLKSGLTGIDNSYIDRLENFILEYGVKGYKWTSKEIVNEKWFRGNGELTDDKVLIAEIMEEIRYPLMTFHNKVNGKHKVKDICSAIYEFLVDVKVFDRINEWIKNFEELGLEDKVKEYSQVESIVIDIIDQAVDVIGEERLEYSEFFRILSSGFANEEIGIIPVALDQVNIGDIARIKGRDVKVLYIVGINDGVLPASKKEEGLLSDRDRTTLGEVGINLSSTTRNKVFEEQYLLYMALTISSEYLMLSYPMADFEGKSLRPSIVISRIKKIFPNLIEESAIYDLKILENKFGKIIAPIPTFNELIISMRKDFDKEYIEPYWSEVYEWFKNNDEFRDKVKNIFKGLSYSNIGDKVSKNKLRKLYQNDLEKLVFSVSKLEKYAECPFSYFVQYGLKAKNRKVYEFTPPDLGSFVHEMLDSFTNKVREDGVLWSDLSNEKCKEIISNLIDKKLMDESNSILNSTKKFKYLAQRFKRVISKSVSVIASQIGKGEFEVFKTEFDFGSYSSGEAITLDLNDNEKVYLQGRIDRIDKLDLDGETYIRIIDYKTGAKKFDLNEIYYGLQVQLLVYLDALIKNSKYILDKQVKPGAILYFKIDDPIIKSKKEMTDEEVEKEVLSALKMKGLVLKDARVVKAMDKDIEGYSLVIPASFKADGGFKATSDVVTEEEFRILREYVNRKMIEICEEMLSGDIKIQPTKNSNIAHCEYCDFSSICQFDTEIKDNKYKIIINKSTNDIWNNIKKEIDNSNKLIKVENEEV.

Residues 1–401 (MSIRFVYGRS…LLKNWSYESV (401 aa)) enclose the UvrD-like helicase ATP-binding domain. 8–15 (GRSGTGKS) lines the ATP pocket. Residues 279–582 (PYRFKGNLEL…NIGDIARIKG (304 aa)) form the UvrD-like helicase C-terminal domain. Positions 787, 1106, 1109, and 1115 each coordinate [4Fe-4S] cluster.

The protein belongs to the helicase family. AddB/RexB type 1 subfamily. As to quaternary structure, heterodimer of AddA and AddB. Requires Mg(2+) as cofactor. [4Fe-4S] cluster is required as a cofactor.

In terms of biological role, the heterodimer acts as both an ATP-dependent DNA helicase and an ATP-dependent, dual-direction single-stranded exonuclease. Recognizes the chi site generating a DNA molecule suitable for the initiation of homologous recombination. The AddB subunit has 5' -&gt; 3' nuclease activity but not helicase activity. This Clostridium beijerinckii (strain ATCC 51743 / NCIMB 8052) (Clostridium acetobutylicum) protein is ATP-dependent helicase/deoxyribonuclease subunit B.